The sequence spans 100 residues: Urease subunit gamma (100 aa).

It belongs to the urease gamma subunit family. Heterotrimer of UreA (gamma), UreB (beta) and UreC (alpha) subunits. Three heterotrimers associate to form the active enzyme.

The protein resides in the cytoplasm. The catalysed reaction is urea + 2 H2O + H(+) = hydrogencarbonate + 2 NH4(+). It participates in nitrogen metabolism; urea degradation; CO(2) and NH(3) from urea (urease route): step 1/1. This is Urease subunit gamma from Yersinia aldovae.